Reading from the N-terminus, the 137-residue chain is Nucleoside diphosphate kinase (137 aa).

Residues K9, F57, R85, T91, R102, and N112 each contribute to the ATP site. Residue H115 is the Pros-phosphohistidine intermediate of the active site.

The protein belongs to the NDK family. As to quaternary structure, homotetramer. The cofactor is Mg(2+).

The protein resides in the cytoplasm. It carries out the reaction a 2'-deoxyribonucleoside 5'-diphosphate + ATP = a 2'-deoxyribonucleoside 5'-triphosphate + ADP. It catalyses the reaction a ribonucleoside 5'-diphosphate + ATP = a ribonucleoside 5'-triphosphate + ADP. Functionally, major role in the synthesis of nucleoside triphosphates other than ATP. The ATP gamma phosphate is transferred to the NDP beta phosphate via a ping-pong mechanism, using a phosphorylated active-site intermediate. In Geotalea daltonii (strain DSM 22248 / JCM 15807 / FRC-32) (Geobacter daltonii), this protein is Nucleoside diphosphate kinase.